Reading from the N-terminus, the 310-residue chain is UDP-N-acetylenolpyruvoylglucosamine reductase (310 aa).

The 166-residue stretch at 23–188 folds into the FAD-binding PCMH-type domain; it reads KVGGNAEIFF…LKAVFKVNKG (166 aa). Arginine 168 is an active-site residue. Serine 217 functions as the Proton donor in the catalytic mechanism. Glutamate 287 is an active-site residue.

It belongs to the MurB family. FAD is required as a cofactor.

It localises to the cytoplasm. It catalyses the reaction UDP-N-acetyl-alpha-D-muramate + NADP(+) = UDP-N-acetyl-3-O-(1-carboxyvinyl)-alpha-D-glucosamine + NADPH + H(+). It functions in the pathway cell wall biogenesis; peptidoglycan biosynthesis. Cell wall formation. In Rickettsia bellii (strain OSU 85-389), this protein is UDP-N-acetylenolpyruvoylglucosamine reductase.